A 137-amino-acid polypeptide reads, in one-letter code: Large ribosomal subunit protein uL16 (137 aa).

It belongs to the universal ribosomal protein uL16 family. As to quaternary structure, part of the 50S ribosomal subunit.

Binds 23S rRNA and is also seen to make contacts with the A and possibly P site tRNAs. This is Large ribosomal subunit protein uL16 from Chelativorans sp. (strain BNC1).